A 272-amino-acid polypeptide reads, in one-letter code: Shikimate dehydrogenase (NADP(+)) (272 aa).

Residues 14–16 and Thr61 each bind shikimate; that span reads SKS. Residue Lys65 is the Proton acceptor of the active site. An NADP(+)-binding site is contributed by Glu77. The shikimate site is built by Asn86 and Asp102. Residues 126–130, 150–155, and Met213 contribute to the NADP(+) site; these read GAGGA and NRTFSK. Position 215 (Tyr215) interacts with shikimate. Gly237 contributes to the NADP(+) binding site.

The protein belongs to the shikimate dehydrogenase family. Homodimer.

The enzyme catalyses shikimate + NADP(+) = 3-dehydroshikimate + NADPH + H(+). Its pathway is metabolic intermediate biosynthesis; chorismate biosynthesis; chorismate from D-erythrose 4-phosphate and phosphoenolpyruvate: step 4/7. Its function is as follows. Involved in the biosynthesis of the chorismate, which leads to the biosynthesis of aromatic amino acids. Catalyzes the reversible NADPH linked reduction of 3-dehydroshikimate (DHSA) to yield shikimate (SA). This is Shikimate dehydrogenase (NADP(+)) from Psychromonas ingrahamii (strain DSM 17664 / CCUG 51855 / 37).